The chain runs to 354 residues: Ribosomal RNA large subunit methyltransferase M (354 aa).

S-adenosyl-L-methionine-binding positions include serine 183, serine 216–glycine 219, aspartate 235, aspartate 255, and aspartate 271. Lysine 300 functions as the Proton acceptor in the catalytic mechanism.

The protein belongs to the class I-like SAM-binding methyltransferase superfamily. RNA methyltransferase RlmE family. RlmM subfamily. As to quaternary structure, monomer.

It localises to the cytoplasm. The enzyme catalyses cytidine(2498) in 23S rRNA + S-adenosyl-L-methionine = 2'-O-methylcytidine(2498) in 23S rRNA + S-adenosyl-L-homocysteine + H(+). In terms of biological role, catalyzes the 2'-O-methylation at nucleotide C2498 in 23S rRNA. The protein is Ribosomal RNA large subunit methyltransferase M of Pseudomonas putida (strain ATCC 47054 / DSM 6125 / CFBP 8728 / NCIMB 11950 / KT2440).